Here is a 327-residue protein sequence, read N- to C-terminus: Zinc transport protein ZntB (327 aa).

The Cytoplasmic portion of the chain corresponds to Met1–Met273. A helical membrane pass occupies residues Ala274–Ile294. Topologically, residues Pro295 to Gln300 are periplasmic. A helical membrane pass occupies residues Phe301–Leu321. Over Tyr322–Leu327 the chain is Cytoplasmic.

Belongs to the CorA metal ion transporter (MIT) (TC 1.A.35) family.

The protein localises to the cell inner membrane. The enzyme catalyses Zn(2+)(out) + H(+)(out) = Zn(2+)(in) + H(+)(in). Zinc transporter. Acts as a Zn(2+):proton symporter, which likely mediates zinc ion uptake. The polypeptide is Zinc transport protein ZntB (Shigella flexneri serotype 5b (strain 8401)).